A 278-amino-acid chain; its full sequence is ATP synthase subunit a (278 aa).

Helical transmembrane passes span 43–63 (TWHI…LWIF), 104–124 (IAPL…MDMI), 148–168 (DVNI…FYSI), 191–211 (IPVN…SLAL), 222–242 (LIFI…TLGV), and 249–269 (LIFH…LTIV).

Belongs to the ATPase A chain family. As to quaternary structure, F-type ATPases have 2 components, CF(1) - the catalytic core - and CF(0) - the membrane proton channel. CF(1) has five subunits: alpha(3), beta(3), gamma(1), delta(1), epsilon(1). CF(0) has three main subunits: a(1), b(2) and c(9-12). The alpha and beta chains form an alternating ring which encloses part of the gamma chain. CF(1) is attached to CF(0) by a central stalk formed by the gamma and epsilon chains, while a peripheral stalk is formed by the delta and b chains.

Its subcellular location is the cell inner membrane. Functionally, key component of the proton channel; it plays a direct role in the translocation of protons across the membrane. In Shewanella baltica (strain OS185), this protein is ATP synthase subunit a.